A 500-amino-acid polypeptide reads, in one-letter code: tRNA modification GTPase MnmE (500 aa).

The (6S)-5-formyl-5,6,7,8-tetrahydrofolate site is built by Arg24, Glu120, and Lys159. A TrmE-type G domain is found at 256 to 420; it reads GIPVAIIGET…LEKKLVQAAA (165 aa). Asn266 contributes to the K(+) binding site. GTP contacts are provided by residues 266-271, 285-291, and 310-313; these read NAGKST, SDIHGTT, and DTAG. Ser270 contributes to the Mg(2+) binding site. Residues Ser285, Ile287, and Thr290 each contribute to the K(+) site. A Mg(2+)-binding site is contributed by Thr291. (6S)-5-formyl-5,6,7,8-tetrahydrofolate is bound at residue Lys500.

Belongs to the TRAFAC class TrmE-Era-EngA-EngB-Septin-like GTPase superfamily. TrmE GTPase family. In terms of assembly, homodimer. Heterotetramer of two MnmE and two MnmG subunits. K(+) serves as cofactor.

The protein resides in the cytoplasm. Its function is as follows. Exhibits a very high intrinsic GTPase hydrolysis rate. Involved in the addition of a carboxymethylaminomethyl (cmnm) group at the wobble position (U34) of certain tRNAs, forming tRNA-cmnm(5)s(2)U34. The chain is tRNA modification GTPase MnmE from Phocaeicola vulgatus (strain ATCC 8482 / DSM 1447 / JCM 5826 / CCUG 4940 / NBRC 14291 / NCTC 11154) (Bacteroides vulgatus).